Here is a 479-residue protein sequence, read N- to C-terminus: U6 small nuclear RNA (adenine-(43)-N(6))-methyltransferase (479 aa).

S-adenosyl-L-methionine is bound by residues Lys82, Gly108, Asp131, Thr164, and Asn184. An involved in dlc-1 binding region spans residues 420–424 (DNASQ).

The protein belongs to the methyltransferase superfamily. METTL16/RlmF family. Self-associates. Interacts with dlc-1; the interaction is direct, and is required for nuclear localization of mett-10. In terms of tissue distribution, expressed in the intestine, vulva, and cells of the somatic gonad including distal tip cells, gonadal sheath cells and spermatheca.

It localises to the nucleus. The enzyme catalyses an adenosine in mRNA + S-adenosyl-L-methionine = an N(6)-methyladenosine in mRNA + S-adenosyl-L-homocysteine + H(+). The catalysed reaction is adenosine in U6 snRNA + S-adenosyl-L-methionine = N(6)-methyladenosine in U6 snRNA + S-adenosyl-L-homocysteine + H(+). Its function is as follows. RNA N6-methyltransferase that methylates adenosine residues at the N(6) position of a subset of RNAs and is involved in S-adenosyl-L-methionine homeostasis by regulating splicing of S-adenosylmethionine synthase transcripts (sams-3, sams-4 and sams-5). Able to N6-methylate a subset of mRNAs containing the 5'UACAGAAAC-3' nonamer sequence. Plays a key role in S-adenosyl-L-methionine homeostasis: under rich-diet conditions, catalyzes N6-methylation of S-adenosylmethionine synthase mRNAs (sams-3, sams-4 and sams-5), directly inhibiting splicing and protein production of S-adenosylmethionine synthase. In addition to mRNAs, also able to mediate N6-methylation of U6 small nuclear RNA (U6 snRNA). Required for gamete production, inhibiting germ cell proliferative fate and ensuring germ cell meiotic development. Also promotes progression of the mitotic cell cycle in those germ cells that continue to proliferate. Plays a role in the development of the vulva, somatic gonad and embryo. This is U6 small nuclear RNA (adenine-(43)-N(6))-methyltransferase from Caenorhabditis elegans.